Consider the following 168-residue polypeptide: Outer-membrane lipoprotein YfiB (168 aa).

Positions 1–25 (MLPQRLHPSRLLALALFSLVLGLAG) are cleaved as a signal peptide. The N-palmitoyl cysteine moiety is linked to residue C26. The S-diacylglycerol cysteine moiety is linked to residue C26. One can recognise an OmpA-like domain in the interval 53–168 (EGWEFGMSSK…RRVAIIVPAE (116 aa)).

It belongs to the outer membrane OOP (TC 1.B.6) superfamily. In terms of assembly, homodimer. Interacts with YfiR. The YfiB-YfiR complex is a 2:2 heterotetramer.

The protein resides in the cell outer membrane. Both lipid anchor in the outer membrane and peptidoglycan binding are required for full activity. Once activated by certain cell stress, the dimeric YfiB transforms from a compact conformation to a stretched conformation, allowing the periplasmic domain of the membrane-anchored YfiB to penetrate the cell wall and sequester the YfiR dimer. GMP enhances the binding affinity between YfiB and YfiR. Its function is as follows. Activates the diguanylate cyclase TpbB/YfiN by sequestering YfiR at the outer membrane, which counteracts the YfiR-mediated repression of TpbB/YfiN at the inner membrane and leads to increased c-di-GMP production. May act as a sensor of envelope stress. Functionally, part of the YfiB-TpbB-YfiR (or yfiBNR) system, encoding a tripartite signaling module that modulates intracellular c-di-GMP levels. The system is a key regulator of the small colony variant (SCV) phenotype, and plays an important role in biofilm formation and in vivo persistence. The c-di-GMP produced by TpbB/YfiN stimulates the production of the Pel and Psl exopolysaccharides, which promotes surface attachment, generates an SCV phenotype and confers resistance against phagocytosis. The chain is Outer-membrane lipoprotein YfiB from Pseudomonas aeruginosa (strain ATCC 15692 / DSM 22644 / CIP 104116 / JCM 14847 / LMG 12228 / 1C / PRS 101 / PAO1).